Reading from the N-terminus, the 352-residue chain is N-lysine methyltransferase KMT5A (352 aa).

Residues 21-51 are disordered; the sequence is AVAATAPGPEMVERRGPGRPRTNGENVFTGQ. A Phosphoserine modification is found at Ser-59. Positions 87 to 202 are disordered; the sequence is PLAGIYRKRD…KSKAELQSEE (116 aa). Over residues 109–121 the composition is skewed to basic and acidic residues; that stretch reads MKAEEQKIKDARR. Residue Thr-140 is modified to Phosphothreonine. Over residues 156–172 the composition is skewed to basic residues; the sequence is GLKKPVRGKQAPRKKAQ. The region spanning 216–337 is the SET domain; it reads EGMKIDLIDG…AGEELLYDYG (122 aa). S-adenosyl-L-methionine is bound by residues 226–228, Tyr-271, and 298–299; these read KGR and NH.

Belongs to the class V-like SAM-binding methyltransferase superfamily. Histone-lysine methyltransferase family. PR/SET subfamily. As to quaternary structure, interacts with L3MBTL1. Interacts with SIRT2 (phosphorylated form); the interaction is direct, stimulates KMT5A-mediated methyltransferase activity at histone H4 'Lys-20' (H4K20me1) and is increased in a H(2)O(2)-induced oxidative stress-dependent manner. In terms of processing, ubiquitinated and degraded by the DCX(DTL) complex.

It localises to the nucleus. The protein localises to the chromosome. The enzyme catalyses L-lysyl(20)-[histone H4] + S-adenosyl-L-methionine = N(6)-methyl-L-lysyl(20)-[histone H4] + S-adenosyl-L-homocysteine + H(+). The catalysed reaction is L-lysyl-[protein] + S-adenosyl-L-methionine = N(6)-methyl-L-lysyl-[protein] + S-adenosyl-L-homocysteine + H(+). Protein-lysine N-methyltransferase that monomethylates both histones and non-histone proteins. Specifically monomethylates 'Lys-20' of histone H4 (H4K20me1). H4K20me1 is enriched during mitosis and represents a specific tag for epigenetic transcriptional repression. Mainly functions in euchromatin regions, thereby playing a central role in the silencing of euchromatic genes. Required for cell proliferation, probably by contributing to the maintenance of proper higher-order structure of DNA during mitosis. Involved in chromosome condensation and proper cytokinesis. Nucleosomes are preferred as substrate compared to free histones. Mediates monomethylation of p53/TP53 at 'Lys-382', leading to repress p53/TP53-target genes. Plays a negative role in TGF-beta response regulation and a positive role in cell migration. The polypeptide is N-lysine methyltransferase KMT5A (Bos taurus (Bovine)).